A 990-amino-acid chain; its full sequence is Importin beta-like protein kap111 (990 aa).

It belongs to the importin beta family.

It localises to the nucleus. Its function is as follows. Functions as a component of the nuclear pore complex (NPC). NPC components, collectively referred to as nucleoporins (NUPs), can play the role of both NPC structural components and of docking or interaction partners for transiently associated nuclear transport factors. Active directional transport is assured by both, a Phe-Gly (FG) repeat affinity gradient for these transport factors across the NPC and a transport cofactor concentration gradient across the nuclear envelope. The polypeptide is Importin beta-like protein kap111 (kap111) (Schizosaccharomyces pombe (strain 972 / ATCC 24843) (Fission yeast)).